A 251-amino-acid chain; its full sequence is Haloacid dehalogenase-like hydrolase domain-containing protein 3 (251 aa).

N6-acetyllysine; alternate is present on Lys15. At Lys15 the chain carries N6-succinyllysine; alternate. At Lys130 the chain carries N6-acetyllysine.

This sequence belongs to the HAD-like hydrolase superfamily.

This Bos taurus (Bovine) protein is Haloacid dehalogenase-like hydrolase domain-containing protein 3 (HDHD3).